Reading from the N-terminus, the 327-residue chain is MSEKSSRKERDEKTEKETARQGKHRRIRVKSRHYEMPFSRGVLARSLTAIGVEPHKAYEIALKIKEELQDEGIEEISTDELADIIRTKLEEIDETLAERYELWRRIKKREEPIIVLIGGASGVGTSTIASEVGHRLGITNVIGTDAIREVMRRVLAEELYPTLYESSYTAWKRLRYEPAEDPVITGFLDHSEPVVVGIEGVVNRSINEGIHVIVEGVHIVPRLIKKEILNYPNVFVFMLAVEDEEAHKWRFYARSRDTKLSRPAERYLKYFEEIRRIHDFLVEDAEEHDIPVINNEHIDETVDQIVSYISSKLLKGERELSKSVSWW.

Positions 1 to 20 are enriched in basic and acidic residues; the sequence is MSEKSSRKERDEKTEKETAR. The disordered stretch occupies residues 1–27; sequence MSEKSSRKERDEKTEKETARQGKHRRI. The ATP-cone domain maps to 25 to 111; the sequence is RRIRVKSRHY…LWRRIKKREE (87 aa).

Belongs to the 2-phosphoglycerate kinase family. The cofactor is a divalent metal cation.

The catalysed reaction is (2R)-2-phosphoglycerate + ATP = (2R)-2,3-bisphosphoglycerate + ADP + H(+). It functions in the pathway thermoadapter biosynthesis; cyclic 2,3-diphosphoglycerate biosynthesis; cyclic 2,3-diphosphoglycerate from 2-phospho-D-glycerate: step 1/2. Its function is as follows. Catalyzes the phosphorylation of 2-phosphoglycerate to 2,3-diphosphoglycerate. Involved in the biosynthesis of cyclic 2,3-bisphosphoglycerate, a thermoprotectant. In Methanopyrus kandleri (strain AV19 / DSM 6324 / JCM 9639 / NBRC 100938), this protein is 2-phosphoglycerate kinase.